Reading from the N-terminus, the 93-residue chain is Acylphosphatase (93 aa).

Positions 7-93 (CLKAVISGKV…GEFRAFEILR (87 aa)) constitute an Acylphosphatase-like domain. Active-site residues include Arg-22 and Asn-40.

The protein belongs to the acylphosphatase family.

The enzyme catalyses an acyl phosphate + H2O = a carboxylate + phosphate + H(+). The protein is Acylphosphatase (acyP) of Acaryochloris marina (strain MBIC 11017).